We begin with the raw amino-acid sequence, 116 residues long: Putative transmembrane protein ORF116 (116 aa).

3 helical membrane-spanning segments follow: residues 20 to 40 (IVTL…AYAL), 53 to 73 (LLGG…TNSI), and 76 to 96 (FRGA…DVIN).

It localises to the host membrane. In Acidianus bottle-shaped virus (isolate Italy/Pozzuoli) (ABV), this protein is Putative transmembrane protein ORF116.